Reading from the N-terminus, the 278-residue chain is HAUS augmin-like complex subunit 1 (278 aa).

Coiled-coil stretches lie at residues 49-79 (RDVY…LMES), 124-177 (SDLF…KVDN), and 249-277 (SLAQ…DMME).

Belongs to the HAUS1 family. As to quaternary structure, component of the HAUS augmin-like complex. The complex interacts with the gamma-tubulin ring complex and this interaction is required for spindle assembly. Associates with microtubules. The interaction with microtubules is strong during mitosis, while it is weak or absent during interphase. It is unclear whether this interaction is direct or indirect. Interacts with EML3 (phosphorylated at 'Thr-881'). In terms of tissue distribution, widely expressed. Expressed in pancreas, kidney, skeletal muscle, liver and heart. Weakly expressed in lung, brain and placenta.

The protein localises to the cytoplasm. The protein resides in the cytoskeleton. It is found in the microtubule organizing center. It localises to the centrosome. Its subcellular location is the spindle. The protein localises to the spindle pole. Contributes to mitotic spindle assembly, maintenance of centrosome integrity and completion of cytokinesis as part of the HAUS augmin-like complex. The polypeptide is HAUS augmin-like complex subunit 1 (HAUS1) (Homo sapiens (Human)).